The chain runs to 229 residues: Apoptosis regulator Bcl-2 (229 aa).

The short motif at 10–30 (DNREIVMKYIHYKLSQRGYEW) is the BH4 element. Residues 30–82 (WDAGDAGAAPPGAAPAPGILSSQPGRTPAPSRTSPPPPPAAAAGPAPSPVPPV) form a disordered region. Over residues 33-61 (GDAGAAPPGAAPAPGILSSQPGRTPAPSR) the composition is skewed to low complexity. Thr-62 bears the Phosphothreonine; by MAPK8 mark. Positions 62-81 (TSPPPPPAAAAGPAPSPVPP) are enriched in pro residues. Residue Ser-63 is modified to Phosphoserine; by MAPK8 and PKC. The residue at position 77 (Ser-77) is a Phosphoserine; by MAPK8. A BH3 motif is present at residues 83-97 (VHLTLRQAGDDFSRR). Positions 126-145 (ELFRDGVNWGRIVAFFEFGG) match the BH1 motif. The BH2 signature appears at 177-192 (TWIQDNGGWDAFVELY). Residues 202–223 (FSWLSLKALLSLALVGACITLG) traverse the membrane as a helical segment.

It belongs to the Bcl-2 family. In terms of assembly, forms homodimers, and heterodimers with BAX, BAD, BAK and Bcl-X(L). Heterodimerization with BAX requires intact BH1 and BH2 motifs, and is necessary for anti-apoptotic activity. Component of the complex, at least composed of LRPPRC, BECN1 and BCL2; the interactions prevent BECN1 from forming an autophagy-inducing complex with PIK3C3. Interacts with EI24. Also interacts with APAF1, BBC3, BCL2L1, BNIPL, MRPL41 and TP53BP2. Binding to FKBP8 seems to target BCL2 to the mitochondria and probably interferes with the binding of BCL2 to its targets. Interacts with BAG1 in an ATP-dependent manner. Interacts with RAF1 (the 'Ser-338' and 'Ser-339' phosphorylated form). Interacts (via the BH4 domain) with EGLN3; the interaction prevents the formation of the BAX-BCL2 complex and inhibits the anti-apoptotic activity of BCL2. Interacts with G0S2; this interaction also prevents the formation of the anti-apoptotic BAX-BCL2 complex. Interacts with RTL10/BOP. Interacts with the SCF(FBXO10) complex. Interacts (via the loop between motifs BH4 and BH3) with NLRP1 (via LRR repeats), but not with NLRP2, NLRP3, NLRP4, PYCARD, nor MEFV. Interacts with GIMAP3/IAN4, GIMAP4/IAN1 and GIMAP5/IAN5. Interacts with BCAP31. Interacts with IRF3; the interaction is inhibited by Sendai virus infection. Interacts with BECN1; thereby inhibiting autophagy in non-starvation conditions. Interacts with AMBRA1; thereby inhibiting autophagy. Post-translationally, phosphorylation/dephosphorylation on Ser-63 regulates anti-apoptotic activity. Growth factor-stimulated phosphorylation on Ser-63 by PKC is required for the anti-apoptosis activity and occurs during the G2/M phase of the cell cycle. In the absence of growth factors, BCL2 appears to be phosphorylated by other protein kinases such as ERKs and stress-activated kinases. Phosphorylated by MAPK8/JNK1 at Thr-62, Ser-63 and Ser-77, which stimulates starvation-induced autophagy. Dephosphorylated by protein phosphatase 2A (PP2A). Proteolytically cleaved by caspases during apoptosis. The cleaved protein, lacking the BH4 motif, has pro-apoptotic activity, causes the release of cytochrome c into the cytosol promoting further caspase activity. In terms of processing, monoubiquitinated by PRKN, leading to an increase in its stability. Ubiquitinated by SCF(FBXO10), leading to its degradation by the proteasome.

It is found in the mitochondrion outer membrane. The protein localises to the nucleus membrane. The protein resides in the endoplasmic reticulum membrane. It localises to the cytoplasm. Suppresses apoptosis in a variety of cell systems including factor-dependent lymphohematopoietic and neural cells. Regulates cell death by controlling the mitochondrial membrane permeability. Appears to function in a feedback loop system with caspases. Inhibits caspase activity either by preventing the release of cytochrome c from the mitochondria and/or by binding to the apoptosis-activating factor (APAF-1). Also acts as an inhibitor of autophagy: interacts with BECN1 and AMBRA1 during non-starvation conditions and inhibits their autophagy function. May attenuate inflammation by impairing NLRP1-inflammasome activation, hence CASP1 activation and IL1B release. The polypeptide is Apoptosis regulator Bcl-2 (BCL2) (Bos taurus (Bovine)).